The primary structure comprises 257 residues: Zinc import ATP-binding protein ZnuC (257 aa).

The ABC transporter domain occupies Val6–Val221. Gly38–Thr45 serves as a coordination point for ATP.

This sequence belongs to the ABC transporter superfamily. Zinc importer (TC 3.A.1.15.5) family. As to quaternary structure, the complex is composed of two ATP-binding proteins (ZnuC), two transmembrane proteins (ZnuB) and a solute-binding protein (ZnuA).

The protein resides in the cell inner membrane. The enzyme catalyses Zn(2+)(out) + ATP(in) + H2O(in) = Zn(2+)(in) + ADP(in) + phosphate(in) + H(+)(in). Part of the ABC transporter complex ZnuABC involved in zinc import. Responsible for energy coupling to the transport system. The polypeptide is Zinc import ATP-binding protein ZnuC (Marinobacter nauticus (strain ATCC 700491 / DSM 11845 / VT8) (Marinobacter aquaeolei)).